The following is a 360-amino-acid chain: Peptide chain release factor 1 (360 aa).

Gln-235 carries the post-translational modification N5-methylglutamine. The segment covering 283-308 (MQKRQQAEASERRNLLGSGDRSDRNR) has biased composition (basic and acidic residues). The interval 283–313 (MQKRQQAEASERRNLLGSGDRSDRNRTYNFP) is disordered.

The protein belongs to the prokaryotic/mitochondrial release factor family. Post-translationally, methylated by PrmC. Methylation increases the termination efficiency of RF1.

The protein resides in the cytoplasm. Functionally, peptide chain release factor 1 directs the termination of translation in response to the peptide chain termination codons UAG and UAA. The polypeptide is Peptide chain release factor 1 (Yersinia enterocolitica serotype O:8 / biotype 1B (strain NCTC 13174 / 8081)).